Reading from the N-terminus, the 206-residue chain is Ribosomal RNA large subunit methyltransferase E (206 aa).

5 residues coordinate S-adenosyl-L-methionine: Gly60, Trp62, Asp80, Asp96, and Asp121. The Proton acceptor role is filled by Lys161.

The protein belongs to the class I-like SAM-binding methyltransferase superfamily. RNA methyltransferase RlmE family.

It localises to the cytoplasm. The enzyme catalyses uridine(2552) in 23S rRNA + S-adenosyl-L-methionine = 2'-O-methyluridine(2552) in 23S rRNA + S-adenosyl-L-homocysteine + H(+). In terms of biological role, specifically methylates the uridine in position 2552 of 23S rRNA at the 2'-O position of the ribose in the fully assembled 50S ribosomal subunit. In Saccharophagus degradans (strain 2-40 / ATCC 43961 / DSM 17024), this protein is Ribosomal RNA large subunit methyltransferase E.